A 243-amino-acid chain; its full sequence is Venom protease (243 aa).

Residues 1–243 enclose the Peptidase S1 domain; sequence VVGGKPAKLG…DSFILPALKK (243 aa). A disulfide bond links cysteine 34 and cysteine 50. Residues histidine 49 and aspartate 97 each act as charge relay system in the active site. 2 disulfides stabilise this stretch: cysteine 165/cysteine 178 and cysteine 189/cysteine 217. The active-site Charge relay system is serine 193.

Belongs to the peptidase S1 family. As to expression, expressed by the venom duct.

It is found in the secreted. This is Venom protease from Bombus pensylvanicus (American bumblebee).